The primary structure comprises 377 residues: Virion membrane protein A16 (377 aa).

A lipid anchor (N-myristoyl glycine; by host) is attached at Gly-2. Over 2–341 the chain is Virion surface; sequence GAAVTLNRIK…VVKDKIKLPT (340 aa). The chain crosses the membrane as a helical; Signal-anchor for type II membrane protein span at residues 342–362; the sequence is WLGAAITLVVISVIFYFISIY. Residues 363-377 are Intravirion-facing; sequence SRTKIKTNDINVRRR.

The protein belongs to the poxviridae A16/G9/J5 family. In terms of assembly, part of a stable entry-fusion complex (EFC) which is at least composed of proteins A16, A21, A28, G3, G9, H2, J5, and L5. Formation of the viral membrane is necessary for the assembly of the complex. Interacts with G9. Most cysteines are linked by disulfide bonds. They are created by the viral disulfide bond formation pathway, a poxvirus-specific redox pathway that operates on the cytoplasmic side of the MV membranes.

Its subcellular location is the virion membrane. In terms of biological role, envelope protein part of the entry-fusion complex responsible for the virus membrane fusion with host cell membrane during virus entry. Also plays a role in cell-cell fusion (syncytium formation). This chain is Virion membrane protein A16, found in Homo sapiens (Human).